We begin with the raw amino-acid sequence, 297 residues long: Protein MIZU-KUSSEI 1 (297 aa).

As to expression, expressed in root meristematic region, cortical cells, lateral root cap cells, columella cells of the root cap, mature region of the roots and leaf hydathodes.

The protein resides in the endoplasmic reticulum membrane. Functionally, plays a role in lateral root development by maintaining auxin levels. This function requires GNOM (GN/MIZ2) activity. Negatively regulates cytokinin sensitivity on root development. Positively regulates hydrotropism in roots. In Arabidopsis thaliana (Mouse-ear cress), this protein is Protein MIZU-KUSSEI 1 (MIZ1).